The primary structure comprises 55 residues: MAKPTTIKIRLNSSAGTGHFYVTKKNARTMTEKMVVRKYDPVARKHVEYKEGKIK.

The protein belongs to the bacterial ribosomal protein bL33 family.

This is Large ribosomal subunit protein bL33 from Jannaschia sp. (strain CCS1).